We begin with the raw amino-acid sequence, 804 residues long: Leucine--tRNA ligase (804 aa).

Residues 40 to 51 carry the 'HIGH' region motif; that stretch reads PYPSGAGLHVGH. A 'KMSKS' region motif is present at residues 576–580; it reads KMSKS. Lysine 579 is a binding site for ATP.

Belongs to the class-I aminoacyl-tRNA synthetase family.

The protein localises to the cytoplasm. It carries out the reaction tRNA(Leu) + L-leucine + ATP = L-leucyl-tRNA(Leu) + AMP + diphosphate. This chain is Leucine--tRNA ligase, found in Staphylococcus haemolyticus (strain JCSC1435).